The chain runs to 113 residues: HIG1 domain-containing protein C25B8.07c, mitochondrial (113 aa).

Residues 1-27 (MSSKLPKKSEENLELPTFPASEESLSR) are disordered. Positions 12-103 (NLELPTFPAS…PPRREAPSNS (92 aa)) constitute an HIG1 domain. 2 helical membrane passes run 39 to 59 (PFIP…GYYI) and 75 to 95 (VMSQ…IGPP).

It localises to the mitochondrion membrane. The protein is HIG1 domain-containing protein C25B8.07c, mitochondrial of Schizosaccharomyces pombe (strain 972 / ATCC 24843) (Fission yeast).